The sequence spans 155 residues: Ribosomal RNA large subunit methyltransferase H (155 aa).

S-adenosyl-L-methionine contacts are provided by residues L73, G104, and 123–128; that span reads LSALTL.

The protein belongs to the RNA methyltransferase RlmH family. As to quaternary structure, homodimer.

Its subcellular location is the cytoplasm. The enzyme catalyses pseudouridine(1915) in 23S rRNA + S-adenosyl-L-methionine = N(3)-methylpseudouridine(1915) in 23S rRNA + S-adenosyl-L-homocysteine + H(+). Its function is as follows. Specifically methylates the pseudouridine at position 1915 (m3Psi1915) in 23S rRNA. This Coxiella burnetii (strain Dugway 5J108-111) protein is Ribosomal RNA large subunit methyltransferase H.